The primary structure comprises 262 residues: Hemin import ATP-binding protein HmuV (262 aa).

Positions 3-244 (LQARNLTLAR…DHMRRVYGIE (242 aa)) constitute an ABC transporter domain. An ATP-binding site is contributed by 35–42 (GANGAGKS).

The protein belongs to the ABC transporter superfamily. Heme (hemin) importer (TC 3.A.1.14.5) family. The complex is composed of two ATP-binding proteins (HmuV), two transmembrane proteins (HmuU) and a solute-binding protein (HmuT).

It is found in the cell inner membrane. Functionally, part of the ABC transporter complex HmuTUV involved in hemin import. Responsible for energy coupling to the transport system. This chain is Hemin import ATP-binding protein HmuV, found in Bordetella pertussis (strain Tohama I / ATCC BAA-589 / NCTC 13251).